The primary structure comprises 717 residues: Probable cyclic nucleotide-gated ion channel 5 (717 aa).

At 1 to 102 the chain is on the cytoplasmic side; it reads MAGKRENFVR…DKFLLYCNKL (102 aa). The helical transmembrane segment at 103–123 threads the bilayer; it reads FVASCILSVFVDPFFFYLPVI. The Extracellular portion of the chain corresponds to 124 to 136; the sequence is NAESKCLGIDRKL. Residues 137–157 traverse the membrane as a helical segment; that stretch reads AITASTLRTFIDVFYLAHMAL. Topologically, residues 158–190 are cytoplasmic; sequence QLRTAYIAPSSRVFGRGELVIDPAQIAKRYLQR. Residues 191-211 form a helical membrane-spanning segment; sequence WFIIDFLSVLPLPQIVVWRFL. Residues 212–224 lie on the Extracellular side of the membrane; the sequence is QSSNGSDVLATKQ. Residues 225–245 traverse the membrane as a helical segment; sequence ALLFIVLVQYIPRFLRVLPLT. At 246–265 the chain is on the cytoplasmic side; that stretch reads SELKRTAGVFAETAWAGAAY. The chain crosses the membrane as a helical span at residues 266 to 286; sequence YLLLYMLASHIVGAFWYLLAL. At 287-391 the chain is on the extracellular side; it reads ERNDACWQEA…GQGLETSTYP (105 aa). A helical membrane pass occupies residues 392-412; the sequence is MEIIFSISLAISGLILFALLI. Topologically, residues 413 to 717 are cytoplasmic; sequence GNMQTYLQSL…KPPEPDFTAD (305 aa). Residues 498 to 628 and Glu569 each bind a nucleoside 3',5'-cyclic phosphate; that span reads LFKS…TFRF. The calmodulin-binding stretch occupies residues 614 to 629; the sequence is FRRLHSRQVQHTFRFY. The region spanning 634–663 is the IQ domain; sequence RTWAACFIQAAWRRYCKRKKMEEAEAEAAA.

This sequence belongs to the cyclic nucleotide-gated cation channel (TC 1.A.1.5) family. As to quaternary structure, homotetramer or heterotetramer.

The protein localises to the cell membrane. Functionally, probable cyclic nucleotide-gated ion channel. The chain is Probable cyclic nucleotide-gated ion channel 5 (CNGC5) from Arabidopsis thaliana (Mouse-ear cress).